The following is a 186-amino-acid chain: Large ribosomal subunit protein eL15 (186 aa).

The tract at residues R163–R186 is disordered. Residues K170–G179 are compositionally biased toward basic residues.

The protein belongs to the eukaryotic ribosomal protein eL15 family.

The polypeptide is Large ribosomal subunit protein eL15 (Methanosphaera stadtmanae (strain ATCC 43021 / DSM 3091 / JCM 11832 / MCB-3)).